A 276-amino-acid polypeptide reads, in one-letter code: UPF0761 membrane protein APL_1950 (276 aa).

7 helical membrane-spanning segments follow: residues threonine 33–phenylalanine 53, methionine 90–aspartate 110, isoleucine 125–glycine 145, isoleucine 147–phenylalanine 167, leucine 171–valine 191, leucine 203–isoleucine 223, and leucine 239–isoleucine 259.

This sequence belongs to the UPF0761 family.

It localises to the cell inner membrane. This Actinobacillus pleuropneumoniae serotype 5b (strain L20) protein is UPF0761 membrane protein APL_1950.